Consider the following 295-residue polypeptide: MPELPEVEVVRAGLERHVLGATIARVDVLHPRPVRRDLRGPAGFAAALTGRRIEAARRRGKYLWLPLDNGDALLGHLGMSGQLLVQPPDAPDERHLRVRLALEGADEGRELRFVDQRMFGGLSVSAGGADLPPEIAHIARDPLDPEFDDDDFVRRVRRRTSGVKRQLLDQNLISGVGNIYADEALWRARIHGERPGDRLTATRVRELLAHAREVMLAALGEGGTSFDALYVNVNGESGYFDRSLHAYGREGEACERCGTPIRRVAFMNRSSYFCPVCQPAPRRRRAASSRVRVPD.

Pro-2 functions as the Schiff-base intermediate with DNA in the catalytic mechanism. Residue Glu-3 is the Proton donor of the active site. Lys-61 (proton donor; for beta-elimination activity) is an active-site residue. DNA is bound by residues His-95, Arg-117, and Arg-159. The FPG-type zinc finger occupies 245–279; the sequence is HAYGREGEACERCGTPIRRVAFMNRSSYFCPVCQP. Catalysis depends on Arg-269, which acts as the Proton donor; for delta-elimination activity.

Belongs to the FPG family. As to quaternary structure, monomer. The cofactor is Zn(2+).

It catalyses the reaction Hydrolysis of DNA containing ring-opened 7-methylguanine residues, releasing 2,6-diamino-4-hydroxy-5-(N-methyl)formamidopyrimidine.. It carries out the reaction 2'-deoxyribonucleotide-(2'-deoxyribose 5'-phosphate)-2'-deoxyribonucleotide-DNA = a 3'-end 2'-deoxyribonucleotide-(2,3-dehydro-2,3-deoxyribose 5'-phosphate)-DNA + a 5'-end 5'-phospho-2'-deoxyribonucleoside-DNA + H(+). In terms of biological role, involved in base excision repair of DNA damaged by oxidation or by mutagenic agents. Acts as a DNA glycosylase that recognizes and removes damaged bases. Has a preference for oxidized purines, such as 7,8-dihydro-8-oxoguanine (8-oxoG). Has AP (apurinic/apyrimidinic) lyase activity and introduces nicks in the DNA strand. Cleaves the DNA backbone by beta-delta elimination to generate a single-strand break at the site of the removed base with both 3'- and 5'-phosphates. This chain is Formamidopyrimidine-DNA glycosylase, found in Nocardioides sp. (strain ATCC BAA-499 / JS614).